The following is a 243-amino-acid chain: MKWKEQAVILGTRQYGETSIILEVMTRQHGRYMGIVKGGHSRRMAGLLQPGNFVEAEWWARLDEHLGLFRLEALDLYAARLILLPEALYALQLIVFHLRLLPERDPYPSLYDILHLFMQNFDESFVNAELLVRFEMRLLEELGFGLDLSRCAATGRQERLFYVSPKSGRAVCEEAGRPWKEKLLTLPQFLVRRAIRPVNFSDIINGFILTGFFLMRHVWEPRGIKQPSVRVNLIQLFERRFRM.

The protein belongs to the RecO family.

Its function is as follows. Involved in DNA repair and RecF pathway recombination. The chain is DNA repair protein RecO from Bartonella quintana (strain Toulouse) (Rochalimaea quintana).